Consider the following 285-residue polypeptide: 2-methoxy-6-polyprenyl-1,4-benzoquinol methylase, mitochondrial (285 aa).

Residues 1 to 30 (MKGATNLFKSMRKPTNVGNFRQFSVNQVNS) constitute a mitochondrion transit peptide. S-adenosyl-L-methionine is bound by residues threonine 106, aspartate 126, 156–157 (NA), and serine 173.

Belongs to the class I-like SAM-binding methyltransferase superfamily. MenG/UbiE family. In terms of assembly, component of a multi-subunit COQ enzyme complex.

It is found in the mitochondrion inner membrane. It carries out the reaction a 2-methoxy-6-(all-trans-polyprenyl)benzene-1,4-diol + S-adenosyl-L-methionine = a 5-methoxy-2-methyl-3-(all-trans-polyprenyl)benzene-1,4-diol + S-adenosyl-L-homocysteine + H(+). It participates in cofactor biosynthesis; ubiquinone biosynthesis. In terms of biological role, methyltransferase required for the conversion of 2-polyprenyl-6-methoxy-1,4-benzoquinol (DDMQH2) to 2-polyprenyl-3-methyl-6-methoxy-1,4-benzoquinol (DMQH2). The chain is 2-methoxy-6-polyprenyl-1,4-benzoquinol methylase, mitochondrial from Caenorhabditis elegans.